We begin with the raw amino-acid sequence, 302 residues long: Dermonecrotic toxin LiSicTox-alphaIA2bii (302 aa).

A signal peptide spans 1 to 14; it reads IALILVCWSVLSQA. A propeptide spanning residues 15 to 22 is cleaved from the precursor; the sequence is AQTDVEGR. Residue His-34 is part of the active site. Residues Glu-54 and Asp-56 each contribute to the Mg(2+) site. Residue His-70 is the Nucleophile of the active site. 2 cysteine pairs are disulfide-bonded: Cys-74–Cys-80 and Cys-76–Cys-219. Asp-114 contacts Mg(2+). The N-linked (GlcNAc...) asparagine glycan is linked to Asn-279.

It belongs to the arthropod phospholipase D family. Class II subfamily. It depends on Mg(2+) as a cofactor. In terms of tissue distribution, expressed by the venom gland.

Its subcellular location is the secreted. The catalysed reaction is an N-(acyl)-sphingosylphosphocholine = an N-(acyl)-sphingosyl-1,3-cyclic phosphate + choline. The enzyme catalyses an N-(acyl)-sphingosylphosphoethanolamine = an N-(acyl)-sphingosyl-1,3-cyclic phosphate + ethanolamine. It carries out the reaction a 1-acyl-sn-glycero-3-phosphocholine = a 1-acyl-sn-glycero-2,3-cyclic phosphate + choline. It catalyses the reaction a 1-acyl-sn-glycero-3-phosphoethanolamine = a 1-acyl-sn-glycero-2,3-cyclic phosphate + ethanolamine. Functionally, dermonecrotic toxins cleave the phosphodiester linkage between the phosphate and headgroup of certain phospholipids (sphingolipid and lysolipid substrates), forming an alcohol (often choline) and a cyclic phosphate. This toxin acts on sphingomyelin (SM). It may also act on ceramide phosphoethanolamine (CPE), lysophosphatidylcholine (LPC) and lysophosphatidylethanolamine (LPE), but not on lysophosphatidylserine (LPS), and lysophosphatidylglycerol (LPG). It acts by transphosphatidylation, releasing exclusively cyclic phosphate products as second products. Induces dermonecrosis, hemolysis, increased vascular permeability, edema, inflammatory response, and platelet aggregation. This Loxosceles intermedia (Brown spider) protein is Dermonecrotic toxin LiSicTox-alphaIA2bii.